The following is a 234-amino-acid chain: Synaptogyrin-1 (234 aa).

Position 1 is an N-acetylmethionine (Met1). The Cytoplasmic segment spans residues 1 to 23 (MEGGAYGAGKAGGAFDPYALVRQ). The MARVEL domain maps to 20-173 (LVRQPHTILR…QAVLAFQRYQ (154 aa)). The chain crosses the membrane as a helical span at residues 24-44 (PHTILRVVSWLFSIVVFGSIV). Over 45 to 71 (NEGYLNSASEGEEFCIYNRNPNACSYG) the chain is Lumenal. Residues 72-92 (VAVGVLAFLTCLLYLALDVYF) traverse the membrane as a helical segment. The Cytoplasmic portion of the chain corresponds to 93 to 103 (PQISSVKDRKK). A helical membrane pass occupies residues 104–124 (AVLSDIGVSAFWAFLWFVGFC). The Lumenal portion of the chain corresponds to 125 to 148 (YLANQWQVSKPKDNPLNEGTDAAR). Residues 149-169 (AAIAFSFFSIFTWAGQAVLAF) traverse the membrane as a helical segment. The Cytoplasmic portion of the chain corresponds to 170 to 234 (QRYQIGADSA…EPQGYQSQGY (65 aa)). Residues 192–234 (SSMPYAPYVEPSTGPDPAGMGGTYQQPANTFDTEPQGYQSQGY) form a disordered region. A compositionally biased stretch (polar residues) spans 214–234 (TYQQPANTFDTEPQGYQSQGY).

Belongs to the synaptogyrin family.

It localises to the cytoplasmic vesicle. The protein resides in the secretory vesicle. The protein localises to the synaptic vesicle membrane. It is found in the melanosome. Its function is as follows. May play a role in regulated exocytosis. Modulates the localization of synaptophysin/SYP into synaptic-like microvesicles and may therefore play a role in synaptic-like microvesicle formation and/or maturation. Involved in the regulation of short-term and long-term synaptic plasticity. The sequence is that of Synaptogyrin-1 from Pongo abelii (Sumatran orangutan).